Reading from the N-terminus, the 304-residue chain is tRNA dimethylallyltransferase (304 aa).

2-9 (GPTASGKT) serves as a coordination point for ATP. 4-9 (TASGKT) is a binding site for substrate. 4 interaction with substrate tRNA regions span residues 27-30 (DSAL), 151-155 (QRINR), 232-237 (RCVGYR), and 265-272 (KRQITWLR).

Belongs to the IPP transferase family. Monomer. The cofactor is Mg(2+).

The enzyme catalyses adenosine(37) in tRNA + dimethylallyl diphosphate = N(6)-dimethylallyladenosine(37) in tRNA + diphosphate. In terms of biological role, catalyzes the transfer of a dimethylallyl group onto the adenine at position 37 in tRNAs that read codons beginning with uridine, leading to the formation of N6-(dimethylallyl)adenosine (i(6)A). This chain is tRNA dimethylallyltransferase, found in Actinobacillus pleuropneumoniae serotype 5b (strain L20).